The chain runs to 237 residues: Ubiquinone biosynthesis O-methyltransferase (237 aa).

Arginine 38, glycine 57, aspartate 78, and methionine 122 together coordinate S-adenosyl-L-methionine.

Belongs to the methyltransferase superfamily. UbiG/COQ3 family.

It carries out the reaction a 3-demethylubiquinol + S-adenosyl-L-methionine = a ubiquinol + S-adenosyl-L-homocysteine + H(+). The catalysed reaction is a 3-(all-trans-polyprenyl)benzene-1,2-diol + S-adenosyl-L-methionine = a 2-methoxy-6-(all-trans-polyprenyl)phenol + S-adenosyl-L-homocysteine + H(+). Its pathway is cofactor biosynthesis; ubiquinone biosynthesis. In terms of biological role, O-methyltransferase that catalyzes the 2 O-methylation steps in the ubiquinone biosynthetic pathway. The chain is Ubiquinone biosynthesis O-methyltransferase from Methylococcus capsulatus (strain ATCC 33009 / NCIMB 11132 / Bath).